We begin with the raw amino-acid sequence, 80 residues long: Small ribosomal subunit protein bS18 (80 aa).

The protein belongs to the bacterial ribosomal protein bS18 family. Part of the 30S ribosomal subunit. Forms a tight heterodimer with protein bS6.

In terms of biological role, binds as a heterodimer with protein bS6 to the central domain of the 16S rRNA, where it helps stabilize the platform of the 30S subunit. This chain is Small ribosomal subunit protein bS18, found in Methylocella silvestris (strain DSM 15510 / CIP 108128 / LMG 27833 / NCIMB 13906 / BL2).